The following is a 125-amino-acid chain: Multifunctional methyltransferase subunit TRM112-like protein (125 aa).

A TRM112 domain is found at 2 to 121 (KLFVHNFMSS…RDGIPNMLKV (120 aa)).

The protein belongs to the TRM112 family.

It localises to the nucleus. It is found in the nucleoplasm. The protein resides in the cytoplasm. The protein localises to the perinuclear region. In terms of biological role, acts as an activator of both RNA and protein methyltransferases. In Caenorhabditis elegans, this protein is Multifunctional methyltransferase subunit TRM112-like protein.